The primary structure comprises 213 residues: Pyrrolidone-carboxylate peptidase (213 aa).

Residues E78, C141, and H165 contribute to the active site.

It belongs to the peptidase C15 family. In terms of assembly, homotetramer.

It localises to the cytoplasm. The catalysed reaction is Release of an N-terminal pyroglutamyl group from a polypeptide, the second amino acid generally not being Pro.. Functionally, removes 5-oxoproline from various penultimate amino acid residues except L-proline. The sequence is that of Pyrrolidone-carboxylate peptidase from Clostridium perfringens (strain ATCC 13124 / DSM 756 / JCM 1290 / NCIMB 6125 / NCTC 8237 / Type A).